The following is a 405-amino-acid chain: S-adenosylmethionine synthase (405 aa).

Residue 141 to 146 (GQGSVD) coordinates ATP.

This sequence belongs to the AdoMet synthase 2 family. Requires Mg(2+) as cofactor.

It carries out the reaction L-methionine + ATP + H2O = S-adenosyl-L-methionine + phosphate + diphosphate. It participates in amino-acid biosynthesis; S-adenosyl-L-methionine biosynthesis; S-adenosyl-L-methionine from L-methionine: step 1/1. Functionally, catalyzes the formation of S-adenosylmethionine from methionine and ATP. In Methanococcus maripaludis (strain C5 / ATCC BAA-1333), this protein is S-adenosylmethionine synthase.